Consider the following 115-residue polypeptide: NADH-ubiquinone oxidoreductase chain 3 (115 aa).

Helical transmembrane passes span 4 to 24 (LMIL…AFWL), 55 to 75 (FFLV…LLPL), and 84 to 104 (INMM…GLAY).

This sequence belongs to the complex I subunit 3 family. Core subunit of respiratory chain NADH dehydrogenase (Complex I) which is composed of 45 different subunits. Interacts with TMEM186. Interacts with TMEM242.

Its subcellular location is the mitochondrion inner membrane. It catalyses the reaction a ubiquinone + NADH + 5 H(+)(in) = a ubiquinol + NAD(+) + 4 H(+)(out). Core subunit of the mitochondrial membrane respiratory chain NADH dehydrogenase (Complex I) which catalyzes electron transfer from NADH through the respiratory chain, using ubiquinone as an electron acceptor. Essential for the catalytic activity of complex I. This Podomys floridanus (Florida mouse) protein is NADH-ubiquinone oxidoreductase chain 3.